The sequence spans 73 residues: UPF0154 protein PEPE_0872 (73 aa).

The chain crosses the membrane as a helical span at residues 5–25 (IWIMIVIIALLVGAVGGFFFA).

The protein belongs to the UPF0154 family.

The protein resides in the cell membrane. This Pediococcus pentosaceus (strain ATCC 25745 / CCUG 21536 / LMG 10740 / 183-1w) protein is UPF0154 protein PEPE_0872.